A 468-amino-acid polypeptide reads, in one-letter code: Transmembrane protein 151B (468 aa).

Residues methionine 1–glutamate 25 form a disordered region. Transmembrane regions (helical) follow at residues cysteine 45–alanine 65 and tyrosine 98–tryptophan 118. Residues valine 384–glutamate 438 form a disordered region.

Belongs to the TMEM151 family.

Its subcellular location is the membrane. The sequence is that of Transmembrane protein 151B (TMEM151B) from Bos taurus (Bovine).